A 422-amino-acid polypeptide reads, in one-letter code: Solanesyl diphosphate synthase 3, chloroplastic/mitochondrial (422 aa).

A chloroplast and mitochondrion-targeting transit peptide spans 1-32 (MLFTRSVARISSKFLRNRSFYGSSQSLASHRF). Isopentenyl diphosphate contacts are provided by K125, R128, and H174. Positions 181 and 185 each coordinate Mg(2+). An an all-trans-polyprenyl diphosphate-binding site is contributed by R190. R191 serves as a coordination point for isopentenyl diphosphate. An all-trans-polyprenyl diphosphate-binding residues include K267, T268, Q305, and K322.

The protein belongs to the FPP/GGPP synthase family. As to quaternary structure, homodimer. The cofactor is Mg(2+). As to expression, ubiquitous. Highest expression in seeds and shoot apical meristem.

The protein localises to the plastid. It is found in the chloroplast. Its subcellular location is the mitochondrion. It carries out the reaction 5 isopentenyl diphosphate + (2E,6E,10E)-geranylgeranyl diphosphate = all-trans-nonaprenyl diphosphate + 5 diphosphate. In terms of biological role, may be involved in the supply of solanesyl diphosphate for ubiquinone-9 (UQ-9) biosynthesis in mitochondria. Synthesizes C25 to C45 medium / long-chain products depending on the type of substrate available. Can use geranyl diphosphate, farnesyl diphosphate or geranylgeranyl diphosphate as substrates, but not dimethylallyl diphosphate. This chain is Solanesyl diphosphate synthase 3, chloroplastic/mitochondrial, found in Arabidopsis thaliana (Mouse-ear cress).